The chain runs to 429 residues: Ribosomal protein uS12 methylthiotransferase RimO (429 aa).

Residues 2-118 enclose the MTTase N-terminal domain; that stretch reads HNIFLLSLGC…VLRAIGAEYR (117 aa). [4Fe-4S] cluster contacts are provided by Cys-11, Cys-47, Cys-81, Cys-142, Cys-146, and Cys-149. The Radical SAM core domain occupies 128 to 357; that stretch reads LTPPHYAFLK…MELQETISQE (230 aa). In terms of domain architecture, TRAM spans 360-427; that stretch reads REFEGNEIVV…PYDLEGEVIG (68 aa).

It belongs to the methylthiotransferase family. RimO subfamily. It depends on [4Fe-4S] cluster as a cofactor.

The protein localises to the cytoplasm. It carries out the reaction L-aspartate(89)-[ribosomal protein uS12]-hydrogen + (sulfur carrier)-SH + AH2 + 2 S-adenosyl-L-methionine = 3-methylsulfanyl-L-aspartate(89)-[ribosomal protein uS12]-hydrogen + (sulfur carrier)-H + 5'-deoxyadenosine + L-methionine + A + S-adenosyl-L-homocysteine + 2 H(+). In terms of biological role, catalyzes the methylthiolation of an aspartic acid residue of ribosomal protein uS12. This is Ribosomal protein uS12 methylthiotransferase RimO from Chlorobium limicola (strain DSM 245 / NBRC 103803 / 6330).